A 476-amino-acid polypeptide reads, in one-letter code: Cytosolic iron-sulfur assembly component 3 (476 aa).

At Ala2 the chain carries N-acetylalanine. The [4Fe-4S] cluster site is built by Cys24, Cys71, Cys74, Cys77, Cys190, Cys246, Cys395, and Cys399.

It belongs to the NARF family. External component of the CIA complex. In the CIA complex, interacts directly with CIAO1 and MMS19.

Functionally, component of the cytosolic iron-sulfur protein assembly (CIA) complex, a multiprotein complex that mediates the incorporation of iron-sulfur cluster into extramitochondrial Fe/S proteins. Seems to negatively regulate the level of HIF1A expression, although this effect could be indirect. The sequence is that of Cytosolic iron-sulfur assembly component 3 from Bos taurus (Bovine).